A 132-amino-acid chain; its full sequence is Phosphomevalonate dehydratase small subunit (132 aa).

The active-site Proton acceptor is Ser62.

Belongs to the AcnX type II small subunit family. As to quaternary structure, heterodimer composed of a large subunit (PMDh-L) and a small subunit (PMDh-S).

The catalysed reaction is (R)-5-phosphomevalonate = (2E)-3-methyl-5-phosphooxypent-2-enoate + H2O. It functions in the pathway isoprenoid biosynthesis; isopentenyl diphosphate biosynthesis via mevalonate pathway. Component of a hydro-lyase that catalyzes the dehydration of mevalonate 5-phosphate (MVA5P) to form trans-anhydromevalonate 5-phosphate (tAHMP). Involved in the archaeal mevalonate (MVA) pathway, which provides fundamental precursors for isoprenoid biosynthesis, such as isopentenyl diphosphate (IPP) and dimethylallyl diphosphate (DMAPP). This is Phosphomevalonate dehydratase small subunit from Methanocella arvoryzae (strain DSM 22066 / NBRC 105507 / MRE50).